The sequence spans 446 residues: MAKNKALFECQACGNQQSKWLGKCPDCGAWDSFVELKAEQIKVLKELAQVSMKTSEAVCIEDVELEHFTRYSTDDNELDLVLGGGLVEGSLVLIGGSPGVGKSTLLLKIASNLAKQGKKVLYVSGEESKAQIKLRADRLEANTPNLFLLTELCLENILEELHKKDYSILIVDSIQTLYSNKITSAAGSITQVREITFELMRVSKAYNISTFIIGHITKEGAIAGPRVLEHMVDVVLYFEGDATKEIRLLRGFKNRFGGTNEVGIFEMTAKGLISAKDLANRFFTRGKAISGSALGVVMEGSRALVLEVQALVCESSYPKRSATGYEKNRLDMLLALLERKLEIPLGHYDVFVNISGGVKVSETAADLAVVAAIISSFKNRPLSKDSIFIGELSLNGEIREVFSLDTRLKEAKMQKFKNAIVPSKPLEDIGLKCFVAKELSQVLEWM.

Residues Cys-10–Cys-27 form a C4-type zinc finger. Gly-96–Ser-103 serves as a coordination point for ATP. The short motif at Lys-253–Gly-257 is the RadA KNRFG motif element. Positions Asp-349 to Met-446 are lon-protease-like.

Belongs to the RecA family. RadA subfamily.

DNA-dependent ATPase involved in processing of recombination intermediates, plays a role in repairing DNA breaks. Stimulates the branch migration of RecA-mediated strand transfer reactions, allowing the 3' invading strand to extend heteroduplex DNA faster. Binds ssDNA in the presence of ADP but not other nucleotides, has ATPase activity that is stimulated by ssDNA and various branched DNA structures, but inhibited by SSB. Does not have RecA's homology-searching function. This is DNA repair protein RadA from Campylobacter jejuni subsp. jejuni serotype O:2 (strain ATCC 700819 / NCTC 11168).